Reading from the N-terminus, the 270-residue chain is Small ribosomal subunit protein bS1m (270 aa).

The segment at 218 to 250 (TKQGFKHLGPKPLAYTEKKRETTKQSTKNNVFQ) is disordered.

The protein belongs to the bacterial ribosomal protein bS1 family.

The protein localises to the mitochondrion. The chain is Small ribosomal subunit protein bS1m (RPS1) from Marchantia polymorpha (Common liverwort).